The primary structure comprises 493 residues: Glutamate--tRNA ligase (493 aa).

Residues 10–20 (PSPTGDPHVGT) carry the 'HIGH' region motif. The 'KMSKS' region signature appears at 251–255 (KLSKR). Lys254 is an ATP binding site.

Belongs to the class-I aminoacyl-tRNA synthetase family. Glutamate--tRNA ligase type 1 subfamily. Monomer.

The protein localises to the cytoplasm. It carries out the reaction tRNA(Glu) + L-glutamate + ATP = L-glutamyl-tRNA(Glu) + AMP + diphosphate. Functionally, catalyzes the attachment of glutamate to tRNA(Glu) in a two-step reaction: glutamate is first activated by ATP to form Glu-AMP and then transferred to the acceptor end of tRNA(Glu). This is Glutamate--tRNA ligase from Pseudomonas syringae pv. syringae (strain B728a).